Here is a 334-residue protein sequence, read N- to C-terminus: Phosphate acyltransferase (334 aa).

The protein belongs to the PlsX family. Homodimer. Probably interacts with PlsY.

The protein localises to the cytoplasm. It carries out the reaction a fatty acyl-[ACP] + phosphate = an acyl phosphate + holo-[ACP]. It functions in the pathway lipid metabolism; phospholipid metabolism. Functionally, catalyzes the reversible formation of acyl-phosphate (acyl-PO(4)) from acyl-[acyl-carrier-protein] (acyl-ACP). This enzyme utilizes acyl-ACP as fatty acyl donor, but not acyl-CoA. The sequence is that of Phosphate acyltransferase from Thermotoga petrophila (strain ATCC BAA-488 / DSM 13995 / JCM 10881 / RKU-1).